Reading from the N-terminus, the 59-residue chain is Chromatin protein Cren7 (59 aa).

Belongs to the Cren7 family. Monomer. In terms of processing, methylated at multiple sites, to varying extents.

It is found in the chromosome. The protein resides in the cytoplasm. Functionally, a chromatin protein, binds double-stranded DNA without sequence specificity. Constrains negative DNA supercoils. The polypeptide is Chromatin protein Cren7 (Sulfolobus acidocaldarius (strain ATCC 33909 / DSM 639 / JCM 8929 / NBRC 15157 / NCIMB 11770)).